Reading from the N-terminus, the 209-residue chain is Thiamine-phosphate synthase (209 aa).

Residues 36-40 and N68 contribute to the 4-amino-2-methyl-5-(diphosphooxymethyl)pyrimidine site; that span reads QYRDK. 2 residues coordinate Mg(2+): D69 and D87. T106 contributes to the 4-amino-2-methyl-5-(diphosphooxymethyl)pyrimidine binding site. Residue 133–135 participates in 2-[(2R,5Z)-2-carboxy-4-methylthiazol-5(2H)-ylidene]ethyl phosphate binding; sequence SST. K136 provides a ligand contact to 4-amino-2-methyl-5-(diphosphooxymethyl)pyrimidine. 2-[(2R,5Z)-2-carboxy-4-methylthiazol-5(2H)-ylidene]ethyl phosphate is bound at residue G163.

Belongs to the thiamine-phosphate synthase family. The cofactor is Mg(2+).

The enzyme catalyses 2-[(2R,5Z)-2-carboxy-4-methylthiazol-5(2H)-ylidene]ethyl phosphate + 4-amino-2-methyl-5-(diphosphooxymethyl)pyrimidine + 2 H(+) = thiamine phosphate + CO2 + diphosphate. The catalysed reaction is 2-(2-carboxy-4-methylthiazol-5-yl)ethyl phosphate + 4-amino-2-methyl-5-(diphosphooxymethyl)pyrimidine + 2 H(+) = thiamine phosphate + CO2 + diphosphate. It catalyses the reaction 4-methyl-5-(2-phosphooxyethyl)-thiazole + 4-amino-2-methyl-5-(diphosphooxymethyl)pyrimidine + H(+) = thiamine phosphate + diphosphate. Its pathway is cofactor biosynthesis; thiamine diphosphate biosynthesis; thiamine phosphate from 4-amino-2-methyl-5-diphosphomethylpyrimidine and 4-methyl-5-(2-phosphoethyl)-thiazole: step 1/1. Its function is as follows. Condenses 4-methyl-5-(beta-hydroxyethyl)thiazole monophosphate (THZ-P) and 2-methyl-4-amino-5-hydroxymethyl pyrimidine pyrophosphate (HMP-PP) to form thiamine monophosphate (TMP). This is Thiamine-phosphate synthase from Pseudomonas paraeruginosa (strain DSM 24068 / PA7) (Pseudomonas aeruginosa (strain PA7)).